The sequence spans 382 residues: Galactokinase (382 aa).

Residue 34 to 37 coordinates substrate; it reads EHTD. An ATP-binding site is contributed by 124–130; it reads GAGLSSS. Mg(2+)-binding residues include Ser130 and Glu162. Asp174 serves as the catalytic Proton acceptor. Tyr223 lines the substrate pocket.

It belongs to the GHMP kinase family. GalK subfamily.

The protein resides in the cytoplasm. It catalyses the reaction alpha-D-galactose + ATP = alpha-D-galactose 1-phosphate + ADP + H(+). It functions in the pathway carbohydrate metabolism; galactose metabolism. Its function is as follows. Catalyzes the transfer of the gamma-phosphate of ATP to D-galactose to form alpha-D-galactose-1-phosphate (Gal-1-P). In Salmonella gallinarum (strain 287/91 / NCTC 13346), this protein is Galactokinase.